The sequence spans 179 residues: NADH dehydrogenase [ubiquinone] 1 beta subcomplex subunit 9 (179 aa).

An N-acetylalanine modification is found at Ala2. Position 85 is a phosphoserine (Ser85). The disordered stretch occupies residues 136-162 (EVKQLQEETPPGGPLTEALPPARKEGD).

The protein belongs to the complex I LYR family. As to quaternary structure, mammalian complex I is composed of 45 different subunits.

The protein resides in the mitochondrion inner membrane. Its function is as follows. Accessory subunit of the mitochondrial membrane respiratory chain NADH dehydrogenase (Complex I), that is believed to be not involved in catalysis. Complex I functions in the transfer of electrons from NADH to the respiratory chain. The immediate electron acceptor for the enzyme is believed to be ubiquinone. The sequence is that of NADH dehydrogenase [ubiquinone] 1 beta subcomplex subunit 9 (NDUFB9) from Pongo abelii (Sumatran orangutan).